The sequence spans 679 residues: ATP-dependent zinc metalloprotease FtsH (679 aa).

At 1 to 6 the chain is on the cytoplasmic side; it reads MNRIFR. The helical transmembrane segment at 7 to 27 threads the bilayer; sequence NTIFYLLIFLVIVGIVSVFNS. Residues 28 to 114 lie on the Extracellular side of the membrane; the sequence is DQTETENVSF…IEPADETSGW (87 aa). The helical transmembrane segment at 115-135 threads the bilayer; sequence VQFFTGIIPFIIIFILFFFLL. Residues 136 to 679 lie on the Cytoplasmic side of the membrane; that stretch reads SQAQGGGSRV…SFEDDTNKKE (544 aa). 206 to 213 provides a ligand contact to ATP; the sequence is GPPGTGKT. His-428 lines the Zn(2+) pocket. Residue Glu-429 is part of the active site. The Zn(2+) site is built by His-432 and Asp-504. Basic and acidic residues-rich tracts occupy residues 621–642 and 658–679; these read LEKE…KEET and PIEK…NKKE. Residues 621-679 form a disordered region; the sequence is LEKEKASESDVKVNINSKKEETPQVEAEQPQEPNTDEPIEKDPSVEDNRSFEDDTNKKE.

In the central section; belongs to the AAA ATPase family. The protein in the C-terminal section; belongs to the peptidase M41 family. In terms of assembly, homohexamer. The cofactor is Zn(2+).

It localises to the cell membrane. Its function is as follows. Acts as a processive, ATP-dependent zinc metallopeptidase for both cytoplasmic and membrane proteins. Plays a role in the quality control of integral membrane proteins. In Alkalihalophilus pseudofirmus (strain ATCC BAA-2126 / JCM 17055 / OF4) (Bacillus pseudofirmus), this protein is ATP-dependent zinc metalloprotease FtsH.